The following is a 979-amino-acid chain: Receptor-type tyrosine-protein phosphatase-like N (979 aa).

Residues 1-37 form the signal peptide; that stretch reads MRRPRRPGGSGGSGGSGGLRLLVCLLLLSGRPGGCSA. The segment at 38-134 is RESP18 homology domain; sequence ISAHGCLFDR…HPRDRSGLVP (97 aa). Over 38–575 the chain is Lumenal; it reads ISAHGCLFDR…RQAHGISPMR (538 aa). Residues Cys56 and Cys65 are joined by a disulfide bond. Over residues 113-130 the composition is skewed to basic and acidic residues; the sequence is MERIPRLRPPEPHPRDRS. 3 disordered regions span residues 113-173, 289-330, and 392-443; these read MERI…GSPL, GRAR…AAQP, and MQRG…SSSV. A compositionally biased stretch (polar residues) spans 145–155; sequence TQGNPTGSSPA. Basic and acidic residues predominate over residues 303–322; it reads RAEDSSEGHEEEVLGGRGEK. A phosphoserine mark is found at Ser307 and Ser308. The segment covering 414–424 has biased composition (polar residues); it reads SPASSEVQQVL. The sufficient for dimerization of proICA512 stretch occupies residues 449–575; it reads SPLGQSQPTV…RQAHGISPMR (127 aa). Residues Asn506 and Asn524 are each glycosylated (N-linked (GlcNAc...) asparagine). Residues 576–600 traverse the membrane as a helical segment; the sequence is SVLLTLVALAGVAGLLVALAVALCM. Positions 601–732 are sufficient for dimerization of proICA512; that stretch reads RHHSRQRDKE…PNTCAAAQDE (132 aa). The Cytoplasmic segment spans residues 601 to 979; the sequence is RHHSRQRDKE…VNAILKALPQ (379 aa). The interval 644 to 680 is disordered; it reads RAEGQPEPSRVSSVSSQFSDAAQASPSSHSSTPSWCE. Residues 648-677 are compositionally biased toward low complexity; it reads QPEPSRVSSVSSQFSDAAQASPSSHSSTPS. The Tyrosine-protein phosphatase domain occupies 709-969; that stretch reads LAKEWQALCA…EFALTAVAEE (261 aa). Lys754 is covalently cross-linked (Glycyl lysine isopeptide (Lys-Gly) (interchain with G-Cter in SUMO)).

The protein belongs to the protein-tyrosine phosphatase family. Receptor class 8 subfamily. As to quaternary structure, homodimer; shown for the unprocessed protein (proICA512) in the endoplasmic reticulum and resolved during protein maturation as ICA512-TMF seems to be predominantly monomeric in secretory granules; however, ICA512-CCF interacts with ICA512-TMF disrupting the ICA512-TMF:SNTB2 complex. The isolated lumenal RESP18 homology domain has been shown to form disulfide-linked homooligomers. Interacts (via cytoplasmic domain) with phosphorylated SNTB2; this protects PTPRN against cleavage by CAPN1 to produce ICA512-CCF. Dephosphorylation of SNTB2 upon insulin stimulation disrupts the interaction and results in PTPRN cleavage. Interacts with SNX19. ICA512-CCF interacts with PIAS4; in the nucleus. Interacts with STAT5B (phosphorylated); down-regulated by ICA512-CCF sumoylation; ICA512-CCF prevents STAT5B dephosphorylation; ICA512-CCF mediates interaction of STAT5B with PIAS4. Interacts (via RESP18 homology domain) with insulin and proinsulin. Interacts with PTPRN2, PTPRA and PTPRE. In terms of processing, subject to proteolytic cleavage at multiple sites. Subject to cleavage on a pair of basic residues. On exocytosis of secretory granules in pancreatic beta-cells ICA512-TMF is transiently inserted in the plasma-membrane and cleaved by mu-type calpain CPN1 to yield ICA512-CCF. Post-translationally, O-glycosylated. N-glycosylated. In terms of processing, sumoylated at two sites including Lys-754. Sumoylation decreases interaction with STAT5. Detected in pituitary. Detected in brain (at protein level). Detected in brain. Weakly expressed in the colon, intestine, stomach and pancreas.

It localises to the membrane. The protein localises to the cytoplasmic vesicle. Its subcellular location is the secretory vesicle membrane. The protein resides in the perikaryon. It is found in the cell projection. It localises to the axon. The protein localises to the synapse. Its subcellular location is the cell membrane. The protein resides in the endosome. It is found in the nucleus. In terms of biological role, plays a role in vesicle-mediated secretory processes. Required for normal accumulation of secretory vesicles in hippocampus, pituitary and pancreatic islets. Required for the accumulation of normal levels of insulin-containing vesicles and preventing their degradation. Plays a role in insulin secretion in response to glucose stimuli. Required for normal accumulation of the neurotransmitters norepinephrine, dopamine and serotonin in the brain. In females, but not in males, required for normal accumulation and secretion of pituitary hormones, such as luteinizing hormone (LH) and follicle-stimulating hormone (FSH). Seems to lack intrinsic enzyme activity. Required to maintain normal levels of renin expression and renin release. May regulate catalytic active protein-tyrosine phosphatases such as PTPRA through dimerization. Its function is as follows. ICA512-TMF regulates dynamics and exocytosis of insulin secretory granules (SGs); binding of ICA512-TMF to SNTB2/beta-2-syntrophin is proposed to restrain SGs mobility and exocytosis by tethering them to the actin cytoskeleton depending on UTRN; the function is inhibited by cytoplasmic ICA512-CFF dimerizing with ICA512-TMF and displacing SNTB2. ICA512-CCF translocated to the nucleus promotes expression of insulin and other granule-related genes; the function implicates binding to and regulating activity of STAT5B probably by preventing its dephosphorylation and potentially by inducing its sumoylation by recruiting PIAS4. Enhances pancreatic beta-cell proliferation by converging with signaling by STAT5B and STAT3. ICA512-CCF located in the cytoplasm regulates dynamics and exocytosis of insulin secretory granules (SGs) by dimerizing with ICA512-TMF and displacing SNTB2 thus enhancing SGs mobility and exocytosis. This Mus musculus (Mouse) protein is Receptor-type tyrosine-protein phosphatase-like N (Ptprn).